A 163-amino-acid chain; its full sequence is tRNA-acetylating toxin 2 (163 aa).

Residue Tyr-137 is part of the active site.

This sequence belongs to the acetyltransferase family. GNAT subfamily. In terms of assembly, homodimer. Forms a complex with cognate antitoxin TacA2.

It carries out the reaction glycyl-tRNA(Gly) + acetyl-CoA = N-acetylglycyl-tRNA(Gly) + CoA + H(+). The catalysed reaction is L-isoleucyl-tRNA(Ile) + acetyl-CoA = N-acetyl-L-isoleucyl-tRNA(Ile) + CoA + H(+). It catalyses the reaction L-leucyl-tRNA(Leu) + acetyl-CoA = N-acetyl-L-leucyl-tRNA(Leu) + CoA + H(+). Functionally, toxic component of a type II toxin-antitoxin (TA) system. Acetylates tRNA and inhibits translation. Acetylates mainly Gly and Ile/Leu in vitro. Overexpression during the lag phase of a tacA2-tacT2 deletion strain leads to a 100-fold increase in persister cells in the presence of cefotaxime and a non-growth state in the absence of antibiotic. This protein, which has a single amino acid compared to S.typhimurium strain 14028s (Lys-29 is Glu in 14028s), produces 100-fold more persister cells, has much higher acetylation activity and binds tRNA much better. Persister cell formation and the growth defect are neutralized by cognate antitoxin TacA2. The TacA2-TacT2 complex both represses and derepresses expression of its own operon. The polypeptide is tRNA-acetylating toxin 2 (Salmonella enteritidis).